A 276-amino-acid chain; its full sequence is Secreted RxLR effector protein 85 (276 aa).

A signal peptide spans 1 to 27 (MRYCAFRLGLFFIGYSCCVLLSTPTLA). Residues 110-113 (RQLR) carry the RxLR motif.

Belongs to the RxLR effector family.

The protein localises to the secreted. The protein resides in the host cell membrane. Functionally, secreted effector that partially suppresses the host cell death induced by cell death-inducing proteins. This is Secreted RxLR effector protein 85 from Plasmopara viticola (Downy mildew of grapevine).